Reading from the N-terminus, the 662-residue chain is Potassium channel KAT3 (662 aa).

Over 1–90 the chain is Cytoplasmic; it reads MSTTTTEARS…HFDRRYRLWE (90 aa). A helical transmembrane segment spans residues 91 to 111; the sequence is LFLVILVGYSAWASLFELAFE. Residues 112–118 are Extracellular-facing; sequence KAAEGAL. A helical transmembrane segment spans residues 119-139; the sequence is LTIDLVVDFFFAVDIILTFFV. Topologically, residues 140-163 are cytoplasmic; it reads SYLDNTTYLNVTDHKLIAKRYLKS. A helical transmembrane segment spans residues 164 to 184; the sequence is VAFVMDVASTLPIQFIYKTIT. The Extracellular portion of the chain corresponds to 185 to 194; that stretch reads GDVGRGQAFG. A helical; Voltage-sensor membrane pass occupies residues 195–215; sequence FLNLLRLWRLRRVAELFKRLE. Over 216-229 the chain is Cytoplasmic; sequence KDAHFNYFVIRVIK. Residues 230 to 250 form a helical membrane-spanning segment; that stretch reads LLCVTIFWIHLAGCILYWIAY. The Extracellular segment spans residues 251–277; the sequence is HYPRPTDTWIGSQVEDFKERSVWLGYT. The pore-forming intramembrane region spans 278 to 297; it reads YSMYWSIVTLTTVGYGDLHA. Residues 298–301 lie on the Extracellular side of the membrane; sequence VNSR. The helical transmembrane segment at 302-322 threads the bilayer; that stretch reads EKTFNMFYMLFNIGLTSYIIG. At 323–662 the chain is on the cytoplasmic side; sequence IMTNLVVHGA…LRENDHLYIF (340 aa). 406–527 lines the a nucleoside 3',5'-cyclic phosphate pocket; that stretch reads LFKGFPEGLL…MIIANFMTYL (122 aa). Residues 528–558 are a coiled coil; that stretch reads KGLNDELKKEIPFLRDLLDDADAQVQETVQS. In terms of domain architecture, KHA spans 591–662; it reads RVIIHGQAPP…LRENDHLYIF (72 aa).

Belongs to the potassium channel family. Plant (TC 1.A.1.4) subfamily. The potassium channel is probably composed of a homo- or heterotetrameric complex of pore-forming subunits. May interact with AKT1 and AKT2. Interacts with SLAC1. In terms of tissue distribution, expressed predominantly in root hairs and root endodermis and, at a lower level, in leaf nodes, trichomes, and hydathodes.

Its subcellular location is the membrane. Probable modulatory (alpha) subunit of inward-rectifying potassium channels. Could mediate potassium uptake from the soil solution by plant roots in association with AKT1. The chain is Potassium channel KAT3 (KAT3) from Arabidopsis thaliana (Mouse-ear cress).